The following is a 1400-amino-acid chain: DNA-directed RNA polymerase subunit beta' (1400 aa).

C71, C73, C86, and C89 together coordinate Zn(2+). Mg(2+)-binding residues include D462, D464, and D466. The Zn(2+) site is built by C811, C885, C892, and C895.

This sequence belongs to the RNA polymerase beta' chain family. The RNAP catalytic core consists of 2 alpha, 1 beta, 1 beta' and 1 omega subunit. When a sigma factor is associated with the core the holoenzyme is formed, which can initiate transcription. Requires Mg(2+) as cofactor. The cofactor is Zn(2+).

The enzyme catalyses RNA(n) + a ribonucleoside 5'-triphosphate = RNA(n+1) + diphosphate. Functionally, DNA-dependent RNA polymerase catalyzes the transcription of DNA into RNA using the four ribonucleoside triphosphates as substrates. This Brucella suis (strain ATCC 23445 / NCTC 10510) protein is DNA-directed RNA polymerase subunit beta'.